Here is a 183-residue protein sequence, read N- to C-terminus: Holliday junction branch migration complex subunit RuvA (183 aa).

A domain I region spans residues 1–63; it reads MIVGLIGVVE…EDANLLYGFL (63 aa). Residues 64-139 form a domain II region; the sequence is EESEKILFER…FFIQDENRPA (76 aa). A region of interest (flexible linker) is located at residue Ala139. The domain III stretch occupies residues 139-183; it reads ARNEVFLALESLGFKSAEINKVLKTLKPNLSIEAAIKEALQQLRS.

It belongs to the RuvA family. Homotetramer. Forms an RuvA(8)-RuvB(12)-Holliday junction (HJ) complex. HJ DNA is sandwiched between 2 RuvA tetramers; dsDNA enters through RuvA and exits via RuvB. An RuvB hexamer assembles on each DNA strand where it exits the tetramer. Each RuvB hexamer is contacted by two RuvA subunits (via domain III) on 2 adjacent RuvB subunits; this complex drives branch migration. In the full resolvosome a probable DNA-RuvA(4)-RuvB(12)-RuvC(2) complex forms which resolves the HJ.

The protein resides in the cytoplasm. Functionally, the RuvA-RuvB-RuvC complex processes Holliday junction (HJ) DNA during genetic recombination and DNA repair, while the RuvA-RuvB complex plays an important role in the rescue of blocked DNA replication forks via replication fork reversal (RFR). RuvA specifically binds to HJ cruciform DNA, conferring on it an open structure. The RuvB hexamer acts as an ATP-dependent pump, pulling dsDNA into and through the RuvAB complex. HJ branch migration allows RuvC to scan DNA until it finds its consensus sequence, where it cleaves and resolves the cruciform DNA. The sequence is that of Holliday junction branch migration complex subunit RuvA from Helicobacter pylori (strain HPAG1).